The primary structure comprises 533 residues: MYQKFQISGKIVKTLGLKMKVLIAVSFGSLLFILSYSNNFNNKLLDATTKVDIKETEKPVDKLIGGLLTADFDEGSCLSRYHKYFLYRKPSPYKPSEYLVSKLRSYEMLHKRCGPDTEYYKEAIEKLSRDDASESNGECRYIVWVAGYGLGNRLLTLASVFLYALLTERIILVDNRKDVSDLLCEPFPGTSWLLPLDFPMLNYTYAWGYNKEYPRCYGTMSEKHSINSTSIPPHLYMHNLHDSRDSDKLFVCQKDQSLIDKVPWLIVQANVYFVPSLWFNPTFQTELVKLFPQKETVFHHLARYLFHPTNEVWDMVTDYYHAHLSKADERLGIQIRVFGKPDGRFKHVIDQVISCTQREKLLPEFATPEESKVNISKTPKLKSVLVASLYPEFSGNLTNMFSKRPSSTGEIVEVYQPSGERVQQTDKKSHDQKALAEMYLLSLTDNIVTSARSTFGYVSYSLGGLKPWLLYQPTNFTTPNPPCVRSKSMEPCYLTPPSHGCEADWGTNSGKILPFVRHCEDLIYGGLKLYDEF.

The Cytoplasmic portion of the chain corresponds to 1-13 (MYQKFQISGKIVK). Residues 14-34 (TLGLKMKVLIAVSFGSLLFIL) traverse the membrane as a helical; Signal-anchor for type II membrane protein segment. The Lumenal portion of the chain corresponds to 35–533 (SYSNNFNNKL…YGGLKLYDEF (499 aa)). 5 N-linked (GlcNAc...) asparagine glycosylation sites follow: Asn-202, Asn-227, Asn-374, Asn-396, and Asn-475.

The protein belongs to the glycosyltransferase 37 family. As to expression, expressed in roots, leaves, flowers and siliques.

The protein resides in the golgi apparatus. Its subcellular location is the golgi stack membrane. Its pathway is protein modification; protein glycosylation. May be involved in cell wall biosynthesis. May act as a fucosyltransferase. The chain is Probable fucosyltransferase 5 (FUT5) from Arabidopsis thaliana (Mouse-ear cress).